Consider the following 400-residue polypeptide: MNIYLVGGAVRDQLLHLPVKDRDWLVVGSTPDELLSLGYLQVGKDFPVFIHPETHEEYALARTEKKSGSGYTGFICDFSPDITLEDDLIRRDLTINAIAQDKNGKLYDPYHGIEDLNNRLLRHISPSFEEDPLRVLRVARFAAKFYHLGFAIAPETLELMKKLSTQGELQHLTAERVWLETEKALMTENPEIYFQTLLKIDALPALMPELATISVENFQYAMTALKNAVSLIKNMDCNKSAVCFATIFLGIIYVNPSHMTQKQQEQDNHQKNITPCLFEKLKVPAYHKELAILAGKYHIYIHNAFNLKSHTIIDLFNKWDVWRKPQRFLELLIVCAAHYSAQSKNQPTYPQKSYLLGLYQKAMTIDVKNIVSAGFKKTEIRNELTRQRISAVEKIKNCYP.

Residues G8 and R11 each contribute to the ATP site. CTP is bound by residues G8 and R11. The Mg(2+) site is built by D21 and D23. 3 residues coordinate ATP: R91, R137, and R140. R91, R137, and R140 together coordinate CTP. Residues 217 to 322 enclose the HD domain; the sequence is NFQYAMTALK…IDLFNKWDVW (106 aa).

The protein belongs to the tRNA nucleotidyltransferase/poly(A) polymerase family. Bacterial CCA-adding enzyme type 2 subfamily. Mg(2+) serves as cofactor.

It carries out the reaction a tRNA precursor + 2 CTP + ATP = a tRNA with a 3' CCA end + 3 diphosphate. It catalyses the reaction a tRNA with a 3' CCA end + 2 CTP + ATP = a tRNA with a 3' CCACCA end + 3 diphosphate. Functionally, catalyzes the addition and repair of the essential 3'-terminal CCA sequence in tRNAs without using a nucleic acid template. Adds these three nucleotides in the order of C, C, and A to the tRNA nucleotide-73, using CTP and ATP as substrates and producing inorganic pyrophosphate. tRNA 3'-terminal CCA addition is required both for tRNA processing and repair. Also involved in tRNA surveillance by mediating tandem CCA addition to generate a CCACCA at the 3' terminus of unstable tRNAs. While stable tRNAs receive only 3'-terminal CCA, unstable tRNAs are marked with CCACCA and rapidly degraded. The chain is CCA-adding enzyme from Actinobacillus succinogenes (strain ATCC 55618 / DSM 22257 / CCUG 43843 / 130Z).